An 81-amino-acid polypeptide reads, in one-letter code: Small ribosomal subunit protein bS16 (81 aa).

The protein belongs to the bacterial ribosomal protein bS16 family.

The chain is Small ribosomal subunit protein bS16 from Phytoplasma mali (strain AT).